Reading from the N-terminus, the 124-residue chain is UPF0102 protein HEAR0176 (124 aa).

Belongs to the UPF0102 family.

The polypeptide is UPF0102 protein HEAR0176 (Herminiimonas arsenicoxydans).